We begin with the raw amino-acid sequence, 860 residues long: Leucine--tRNA ligase (860 aa).

Positions 42–52 match the 'HIGH' region motif; it reads PYPSGRLHMGH. Positions 619-623 match the 'KMSKS' region motif; sequence KMSKS. Lys-622 provides a ligand contact to ATP.

Belongs to the class-I aminoacyl-tRNA synthetase family.

The protein localises to the cytoplasm. It catalyses the reaction tRNA(Leu) + L-leucine + ATP = L-leucyl-tRNA(Leu) + AMP + diphosphate. The sequence is that of Leucine--tRNA ligase from Edwardsiella ictaluri (strain 93-146).